We begin with the raw amino-acid sequence, 372 residues long: DNA-directed RNA polymerase subunit alpha (372 aa).

The tract at residues 1-268 (MIFDEDSNSV…DQFQPFINFD (268 aa)) is alpha N-terminal domain (alpha-NTD). The interval 280 to 372 (KDALPYDSNL…ESLSKQYSEE (93 aa)) is alpha C-terminal domain (alpha-CTD).

Belongs to the RNA polymerase alpha chain family. Homodimer. The RNAP catalytic core consists of 2 alpha, 1 beta, 1 beta' and 1 omega subunit. When a sigma factor is associated with the core the holoenzyme is formed, which can initiate transcription.

The catalysed reaction is RNA(n) + a ribonucleoside 5'-triphosphate = RNA(n+1) + diphosphate. Functionally, DNA-dependent RNA polymerase catalyzes the transcription of DNA into RNA using the four ribonucleoside triphosphates as substrates. The sequence is that of DNA-directed RNA polymerase subunit alpha from Ehrlichia canis (strain Jake).